Here is a 724-residue protein sequence, read N- to C-terminus: Probable serine/threonine-protein kinase KKQ8 (724 aa).

Disordered regions lie at residues 1–81 (MVMQ…RQRS) and 93–188 (HPFR…KDIL). The residue at position 19 (serine 19) is a Phosphoserine. A compositionally biased stretch (low complexity) spans 45-54 (PYRSSSTSPK). The span at 95-106 (FRQTGSGASNSP) shows a compositional bias: polar residues. The segment covering 143–162 (RSSSVSSCDSSNGTTSSSDS) has biased composition (low complexity). Phosphoserine occurs at positions 232, 238, and 241. Residues 329-355 (SQTNHEKRTGQSPNDSNRSSPTQGRED) are disordered. Polar residues predominate over residues 338–351 (GQSPNDSNRSSPTQ). Residues 412–712 (GHPVGLVGAG…VGKLLDMQWM (301 aa)) enclose the Protein kinase domain. Residues 418–426 (VGAGAYGEV) and lysine 455 each bind ATP. Catalysis depends on aspartate 563, which acts as the Proton acceptor.

This sequence belongs to the protein kinase superfamily. CAMK Ser/Thr protein kinase family. NPR/HAL subfamily. HAL5 sub-subfamily.

The protein localises to the cytoplasm. It catalyses the reaction L-seryl-[protein] + ATP = O-phospho-L-seryl-[protein] + ADP + H(+). The enzyme catalyses L-threonyl-[protein] + ATP = O-phospho-L-threonyl-[protein] + ADP + H(+). The sequence is that of Probable serine/threonine-protein kinase KKQ8 (KKQ8) from Saccharomyces cerevisiae (strain ATCC 204508 / S288c) (Baker's yeast).